The following is a 316-amino-acid chain: Nucleotide-binding protein Sala_2050 (316 aa).

Residue 18–25 participates in ATP binding; sequence GLSGAGKS. 69–72 contacts GTP; sequence DSRS. The interval 283-316 is disordered; that stretch reads GYEPTLTHRNLDSAPQDGLEGKPPSAARASGGAR.

This sequence belongs to the RapZ-like family.

Its function is as follows. Displays ATPase and GTPase activities. This is Nucleotide-binding protein Sala_2050 from Sphingopyxis alaskensis (strain DSM 13593 / LMG 18877 / RB2256) (Sphingomonas alaskensis).